The chain runs to 1487 residues: Probable serine/threonine-protein kinase roco11 (1487 aa).

The segment at 108–134 (TQPSSSHNHSNHHHHHHQQQLQQQQQQ) is disordered. A compositionally biased stretch (basic residues) spans 116 to 125 (HSNHHHHHHQ). LRR repeat units lie at residues 295 to 316 (NLAE…ICQL), 318 to 340 (HLKI…ANLT), and 341 to 362 (NLKY…IIEQ). Residues 379-564 (KSETWNKVKL…KILTNEAEKS (186 aa)) form the Roc domain. Residues 379–564 (KSETWNKVKL…KILTNEAEKS (186 aa)) are small GTPase-like. GTP-binding positions include 392–399 (GQEGVGKS), 448–452 (DFGGQ), and 507–510 (THCD). Positions 678–872 (VNQKYIDYND…KTYWANGILL (195 aa)) constitute a COR domain. A disordered region spans residues 891 to 1007 (SILPNNSSST…NNNNNNNNNI (117 aa)). The segment covering 897–931 (SSSTSSSTSSSTSSSTSSSSSSSTSSSSTSTTTTT) has biased composition (low complexity). Residues 932–950 (VQIQSSPFGNSTTIVNKLT) are compositionally biased toward polar residues. A compositionally biased stretch (low complexity) spans 951-1007 (NIDNNNNNNNNNNNNNNNNNNINNNNNNNNNNNNNNNNNNNNNNNNNNNNNNNNNNI). The region spanning 1185 to 1452 (VVCEEQIGVG…YIVKELTNFY (268 aa)) is the Protein kinase domain. ATP contacts are provided by residues 1191-1199 (IGVGGFGLV) and Lys1216. Asp1313 serves as the catalytic Proton acceptor. Positions 1464–1487 (KSINDKSPHPDLISNGVPKLQIAK) are disordered.

This sequence belongs to the protein kinase superfamily. TKL Ser/Thr protein kinase family. ROCO subfamily.

It carries out the reaction L-seryl-[protein] + ATP = O-phospho-L-seryl-[protein] + ADP + H(+). It catalyses the reaction L-threonyl-[protein] + ATP = O-phospho-L-threonyl-[protein] + ADP + H(+). The chain is Probable serine/threonine-protein kinase roco11 (roco11) from Dictyostelium discoideum (Social amoeba).